A 275-amino-acid chain; its full sequence is F-box only protein 50 (275 aa).

The tract at residues 1-67 is disordered; it reads MEEVREGHAL…LPEPAQPSEA (67 aa). The span at 26 to 62 shows a compositional bias: pro residues; the sequence is PPSPRSPSPPPSPPPLPSPPSLPSPAAPEAPELPEPA. S31, S37, and S49 each carry phosphoserine. Residues 95–273 form the FBA domain; it reads LLLRRPLYRN…VTDSSVSVQL (179 aa).

Expressed in the esophagus, oral cavity, skin, tongue and reproductive organs.

It localises to the cytoplasm. Its function is as follows. Promotes cell proliferation. The chain is F-box only protein 50 (NCCRP1) from Homo sapiens (Human).